The following is a 181-amino-acid chain: Adenine phosphoribosyltransferase (181 aa).

The protein belongs to the purine/pyrimidine phosphoribosyltransferase family. In terms of assembly, homodimer.

Its subcellular location is the cytoplasm. The enzyme catalyses AMP + diphosphate = 5-phospho-alpha-D-ribose 1-diphosphate + adenine. Its pathway is purine metabolism; AMP biosynthesis via salvage pathway; AMP from adenine: step 1/1. Functionally, catalyzes a salvage reaction resulting in the formation of AMP, that is energically less costly than de novo synthesis. In Aeromonas salmonicida (strain A449), this protein is Adenine phosphoribosyltransferase.